Consider the following 381-residue polypeptide: Opsin-1 (381 aa).

Topologically, residues 1–53 (MASASLISEPSFSAYWGGSGGFANQTVVDKVPPEMLYLVDPHWYQFPPMNPLW) are extracellular. A glycan (N-linked (GlcNAc...) asparagine) is linked at N24. Residues 54–78 (HGLLGFVIGVLGVISVIGNGMVIYI) form a helical membrane-spanning segment. Residues 79 to 90 (FSTTKSLRTPSN) are Cytoplasmic-facing. A helical membrane pass occupies residues 91-115 (LLVVNLAFSDFLMMFTMSAPMGINC). Topologically, residues 116–130 (YYETWVLGPFMCELY) are extracellular. An intrachain disulfide couples C127 to C204. A helical membrane pass occupies residues 131 to 150 (ALFGSLFGCGSIWTMTMIAL). Residues 151–169 (DRYNVIVKGLSAKPMTNKT) lie on the Cytoplasmic side of the membrane. Residues 170 to 193 (AMLRILFIWAFSVAWTIMPLFGWN) form a helical membrane-spanning segment. At 194–217 (RYVPEGNMTACGTDYLTKDWVSRS) the chain is on the extracellular side. A glycan (N-linked (GlcNAc...) asparagine) is linked at N200. A helical membrane pass occupies residues 218–245 (YILVYSFFVYLLPLGTIIYSYFFILQAV). The Cytoplasmic segment spans residues 246–280 (SAHEKQMREQRKKMNVASLRSAEASQTSAECKLAK). A helical transmembrane segment spans residues 281-304 (VALMTISLWFFGWTPYLIINFTGI). Over 305–311 (FETMKIS) the chain is Extracellular. A helical transmembrane segment spans residues 312 to 336 (PLLTIWGSLFAKANAVFNPIVYGIS). K323 is modified (N6-(retinylidene)lysine). Residues 337–381 (HPKYRAALEKKFPSLACASSSDDNTSVASGATTVSDEKSEKSASA) are Cytoplasmic-facing. Positions 354 to 370 (ASSSDDNTSVASGATTV) are enriched in polar residues. Residues 354–381 (ASSSDDNTSVASGATTVSDEKSEKSASA) form a disordered region. Residues 371-381 (SDEKSEKSASA) show a composition bias toward basic and acidic residues.

The protein belongs to the G-protein coupled receptor 1 family. Opsin subfamily. Post-translationally, phosphorylated on some or all of the serine and threonine residues present in the C-terminal region.

It is found in the cell projection. The protein localises to the rhabdomere membrane. In terms of biological role, visual pigments are the light-absorbing molecules that mediate vision. They consist of an apoprotein, opsin, covalently linked to cis-retinal. The polypeptide is Opsin-1 (Lo1) (Schistocerca gregaria (Desert locust)).